The chain runs to 328 residues: Probable cytosolic iron-sulfur protein assembly protein 1 (328 aa).

WD repeat units lie at residues Leu12–Glu49, Ala54–Glu93, Gly102–Glu141, Glu148–Ala187, Gly192–Phe233, Val246–Val284, and Ala291–Glu328.

This sequence belongs to the WD repeat CIA1 family. As to quaternary structure, interacts with NAR1.

The protein localises to the cytoplasm. Its subcellular location is the nucleus. Functionally, essential component of the cytosolic iron-sulfur (Fe/S) protein assembly machinery. Required for the maturation of extramitochondrial Fe/S proteins. The sequence is that of Probable cytosolic iron-sulfur protein assembly protein 1 from Eremothecium gossypii (strain ATCC 10895 / CBS 109.51 / FGSC 9923 / NRRL Y-1056) (Yeast).